The following is a 98-amino-acid chain: Putative pterin-4-alpha-carbinolamine dehydratase (98 aa).

It belongs to the pterin-4-alpha-carbinolamine dehydratase family.

The enzyme catalyses (4aS,6R)-4a-hydroxy-L-erythro-5,6,7,8-tetrahydrobiopterin = (6R)-L-erythro-6,7-dihydrobiopterin + H2O. The chain is Putative pterin-4-alpha-carbinolamine dehydratase from Jannaschia sp. (strain CCS1).